Reading from the N-terminus, the 349-residue chain is Homoserine O-succinyltransferase (349 aa).

Cys-146 functions as the Acyl-thioester intermediate in the catalytic mechanism. Residues Lys-167 and Ser-196 each coordinate substrate. His-239 (proton acceptor) is an active-site residue. Glu-241 is a catalytic residue. Arg-253 lines the substrate pocket.

Belongs to the MetA family.

It localises to the cytoplasm. It carries out the reaction L-homoserine + succinyl-CoA = O-succinyl-L-homoserine + CoA. Its pathway is amino-acid biosynthesis; L-methionine biosynthesis via de novo pathway; O-succinyl-L-homoserine from L-homoserine: step 1/1. Its function is as follows. Transfers a succinyl group from succinyl-CoA to L-homoserine, forming succinyl-L-homoserine. In vitro, can also use glutaryl-CoA as acyl donor. This Thiobacillus denitrificans (strain ATCC 25259 / T1) protein is Homoserine O-succinyltransferase.